The primary structure comprises 618 residues: 1-deoxy-D-xylulose-5-phosphate synthase (618 aa).

Residues His77 and 118-120 each bind thiamine diphosphate; that span reads GHS. Asp149 is a Mg(2+) binding site. Thiamine diphosphate-binding positions include 150–151, Asn178, Tyr285, and Glu367; that span reads GA. Asn178 is a binding site for Mg(2+).

It belongs to the transketolase family. DXPS subfamily. In terms of assembly, homodimer. Mg(2+) is required as a cofactor. The cofactor is thiamine diphosphate.

It carries out the reaction D-glyceraldehyde 3-phosphate + pyruvate + H(+) = 1-deoxy-D-xylulose 5-phosphate + CO2. It participates in metabolic intermediate biosynthesis; 1-deoxy-D-xylulose 5-phosphate biosynthesis; 1-deoxy-D-xylulose 5-phosphate from D-glyceraldehyde 3-phosphate and pyruvate: step 1/1. In terms of biological role, catalyzes the acyloin condensation reaction between C atoms 2 and 3 of pyruvate and glyceraldehyde 3-phosphate to yield 1-deoxy-D-xylulose-5-phosphate (DXP). In Idiomarina loihiensis (strain ATCC BAA-735 / DSM 15497 / L2-TR), this protein is 1-deoxy-D-xylulose-5-phosphate synthase.